The following is a 269-amino-acid chain: Cytochrome c oxidase subunit 3 (269 aa).

The Mitochondrial matrix portion of the chain corresponds to Met1 to Trp22. A helical membrane pass occupies residues Pro23–Met41. Residues His42–His48 lie on the Mitochondrial intermembrane side of the membrane. The chain crosses the membrane as a helical span at residues Tyr49 to Gly73. Topologically, residues Thr74–Thr80 are mitochondrial matrix. A helical membrane pass occupies residues Leu81 to Leu114. The Mitochondrial intermembrane segment spans residues Thr115–Leu137. The chain crosses the membrane as a helical span at residues Pro138 to Lys161. Residues Gly162–Arg164 are Mitochondrial matrix-facing. A helical membrane pass occupies residues Glu165–Glu188. Residues Tyr189–Phe201 lie on the Mitochondrial intermembrane side of the membrane. Residues Gly202–Ile230 form a helical membrane-spanning segment. The Mitochondrial matrix segment spans residues Phe231–Leu248. The helical transmembrane segment at Tyr249–Tyr265 threads the bilayer. The Mitochondrial intermembrane segment spans residues Tyr266–Ser269.

It belongs to the cytochrome c oxidase subunit 3 family. In terms of assembly, component of the cytochrome c oxidase (complex IV, CIV), a multisubunit enzyme composed of 11 subunits. The complex is composed of a catalytic core of 3 subunits Cox1, Cox2 and Cox3, encoded in the mitochondrial DNA, and 8 supernumerary subunits Cox4, Cox5a/Cox5, Cox6, Cox7, Cox8, Cox7a/Cox9, Cox6b/Cox12 and Cox6a/Cox13, which are encoded in the nuclear genome. The complex exists as a monomer or a dimer and forms respiratory supercomplexes (SCs) in the inner mitochondrial membrane with NADH-ubiquinone oxidoreductase (complex I, CI) and ubiquinol-cytochrome c oxidoreductase (cytochrome b-c1 complex, complex III, CIII), resulting in various different assemblies (supercomplexes I(1)IV(1), I(1)III(3)IV(2), III(2)IV(1) and III(2)IV(2) as well as larger supercomplexes of compositions like I(1)III(2)IV(5-6)).

The protein resides in the mitochondrion inner membrane. It carries out the reaction 4 Fe(II)-[cytochrome c] + O2 + 8 H(+)(in) = 4 Fe(III)-[cytochrome c] + 2 H2O + 4 H(+)(out). Functionally, component of the cytochrome c oxidase, the last enzyme in the mitochondrial electron transport chain which drives oxidative phosphorylation. The respiratory chain contains 3 multisubunit complexes succinate dehydrogenase (complex II, CII), ubiquinol-cytochrome c oxidoreductase (cytochrome b-c1 complex, complex III, CIII) and cytochrome c oxidase (complex IV, CIV), that cooperate to transfer electrons derived from NADH and succinate to molecular oxygen, creating an electrochemical gradient over the inner membrane that drives transmembrane transport and the ATP synthase. Cytochrome c oxidase is the component of the respiratory chain that catalyzes the reduction of oxygen to water. Electrons originating from reduced cytochrome c in the intermembrane space (IMS) are transferred via the dinuclear copper A center (CU(A)) of Cox2 and heme A of Cox1 to the active site in Cox1, a binuclear center (BNC) formed by heme A3 and copper B (CU(B)). The BNC reduces molecular oxygen to 2 water molecules using 4 electrons from cytochrome c in the IMS and 4 protons from the mitochondrial matrix. In Neurospora crassa (strain ATCC 24698 / 74-OR23-1A / CBS 708.71 / DSM 1257 / FGSC 987), this protein is Cytochrome c oxidase subunit 3 (cox-3).